The following is an 888-amino-acid chain: Villin-like protein quail (888 aa).

A Gelsolin-like repeat occupies G307–K366. Positions F823–F888 constitute an HP domain.

The protein belongs to the villin/gelsolin family. Germline specific in adult flies.

Required for the formation of cytoplasmic actin filament bundles in nurse cells, possibly by regulating both the polymerization and organization of actin filaments. Mutations in quail result in female sterility due to the disruption of cytoplasmic transport from the nurse cells into the oocyte late in oogenesis. The protein is Villin-like protein quail (qua) of Drosophila melanogaster (Fruit fly).